Here is a 512-residue protein sequence, read N- to C-terminus: Capsid scaffolding protein (512 aa).

Residues His47, Ser115, and His131 each act as charge relay system in the active site. The tract at residues Asp264 to Arg282 is interaction with pAP. A disordered region spans residues Arg376–Tyr407. A Nuclear localization signal motif is present at residues Lys402 to Arg408. Residues Asp492–Asn512 are interaction with major capsid protein.

The protein belongs to the herpesviridae capsid scaffolding protein family. As to quaternary structure, homomultimer. Interacts with major capsid protein. Exists in a monomer-dimer equilibrium with the dimer being the active species. Capsid scaffolding protein is cleaved by assemblin after formation of the spherical procapsid. As a result, the capsid obtains its mature, icosahedral shape. Cleavages occur at two or more sites: release (R-site) and maturation (M-site).

It is found in the host cytoplasm. It localises to the host nucleus. The catalysed reaction is Cleaves -Ala-|-Ser- and -Ala-|-Ala- bonds in the scaffold protein.. Its function is as follows. Acts as a scaffold protein by binding major capsid protein in the cytoplasm, inducing the nuclear localization of both proteins. Multimerizes in the nucleus such as major capsid protein forms the icosahedral T=16 capsid. Autocatalytic cleavage releases the assembly protein, and subsequently abolishes interaction with major capsid protein. Cleavages products are evicted from the capsid before or during DNA packaging. In terms of biological role, protease that plays an essential role in virion assembly within the nucleus. Catalyzes the cleavage of the assembly protein after formation of the spherical procapsid. By that cleavage, the capsid matures and gains its icosahedral shape. The cleavage sites seem to include -Ala-Ser-, -Ala-Ala-, as well as Ala-Thr bonds. Assemblin and cleavages products are evicted from the capsid before or during DNA packaging. Plays a major role in capsid assembly. Acts as a scaffold protein by binding major capsid protein. Multimerizes in the nucleus such as major capsid protein forms the icosahedral T=16 capsid. Cleaved by assemblin after capsid completion. The cleavages products are evicted from the capsid before or during DNA packaging. The protein is Capsid scaffolding protein (U53) of Human herpesvirus 7 (strain JI) (HHV-7).